The sequence spans 267 residues: 4-hydroxy-tetrahydrodipicolinate reductase (267 aa).

NAD(+) is bound by residues 12 to 17 (GPRGRM), 100 to 102 (GTT), and 126 to 129 (APNF). The active-site Proton donor/acceptor is the His156. His157 contributes to the (S)-2,3,4,5-tetrahydrodipicolinate binding site. Residue Lys160 is the Proton donor of the active site. 166–167 (GT) contributes to the (S)-2,3,4,5-tetrahydrodipicolinate binding site.

Belongs to the DapB family.

It localises to the cytoplasm. It catalyses the reaction (S)-2,3,4,5-tetrahydrodipicolinate + NAD(+) + H2O = (2S,4S)-4-hydroxy-2,3,4,5-tetrahydrodipicolinate + NADH + H(+). The catalysed reaction is (S)-2,3,4,5-tetrahydrodipicolinate + NADP(+) + H2O = (2S,4S)-4-hydroxy-2,3,4,5-tetrahydrodipicolinate + NADPH + H(+). It participates in amino-acid biosynthesis; L-lysine biosynthesis via DAP pathway; (S)-tetrahydrodipicolinate from L-aspartate: step 4/4. Its function is as follows. Catalyzes the conversion of 4-hydroxy-tetrahydrodipicolinate (HTPA) to tetrahydrodipicolinate. The polypeptide is 4-hydroxy-tetrahydrodipicolinate reductase (Bacillus licheniformis (strain ATCC 14580 / DSM 13 / JCM 2505 / CCUG 7422 / NBRC 12200 / NCIMB 9375 / NCTC 10341 / NRRL NRS-1264 / Gibson 46)).